A 538-amino-acid chain; its full sequence is NAD(P)H-quinone oxidoreductase chain 4 1 (538 aa).

Helical transmembrane passes span F7–I27, W37–Y57, L88–W108, L116–D136, L137–I157, F170–F190, A210–F230, S244–I264, F278–F298, M315–L335, Q336–E356, L388–T408, and V418–M438.

Belongs to the complex I subunit 4 family.

It is found in the cellular thylakoid membrane. It catalyses the reaction a plastoquinone + NADH + (n+1) H(+)(in) = a plastoquinol + NAD(+) + n H(+)(out). The enzyme catalyses a plastoquinone + NADPH + (n+1) H(+)(in) = a plastoquinol + NADP(+) + n H(+)(out). In terms of biological role, NDH-1 shuttles electrons from NAD(P)H, via FMN and iron-sulfur (Fe-S) centers, to quinones in the respiratory chain. The immediate electron acceptor for the enzyme in this species is believed to be plastoquinone. Couples the redox reaction to proton translocation (for every two electrons transferred, four hydrogen ions are translocated across the cytoplasmic membrane), and thus conserves the redox energy in a proton gradient. This chain is NAD(P)H-quinone oxidoreductase chain 4 1, found in Nostoc sp. (strain PCC 7120 / SAG 25.82 / UTEX 2576).